Consider the following 227-residue polypeptide: Glutathione S-transferase U18 (227 aa).

Residues glutamate 4–glycine 83 form the GST N-terminal domain. Glutathione contacts are provided by residues serine 14–valine 15, serine 40–lysine 41, lysine 54–methionine 55, and glutamate 67–serine 68. One can recognise a GST C-terminal domain in the interval histidine 90–leucine 221.

Belongs to the GST superfamily. Tau family.

The protein resides in the cytoplasm. It localises to the cytosol. It carries out the reaction RX + glutathione = an S-substituted glutathione + a halide anion + H(+). May be involved in the conjugation of reduced glutathione to a wide number of exogenous and endogenous hydrophobic electrophiles and have a detoxification role against certain herbicides. This is Glutathione S-transferase U18 (GSTU18) from Arabidopsis thaliana (Mouse-ear cress).